A 749-amino-acid polypeptide reads, in one-letter code: MIIINKYIRMNKIAILFSFFILICCTGYSISYKINGINENKVLSLSSSPSPSSSSSSSQILEKGKEEIKKIKKTNKNKLLYNVAIVDLEPKLEIEQELLTRNNKKKMEMKEEMDIAMMMMKAADRTDQVSTSSSSSSFSEENKKSSSDDSAPAIQSNLTFSGYMTGGEQVCDPKSCNSPSVFTQNYLCNTSSAWANGYVFHDPVPPTGLFVVHKIVVTFTGMFNVIPPTSMVFSLVNGEENAGIFFISKSSPSQCPNCQISFSPRTLPDVDPNGLASYRYGSNNSIIFNLFETDVACIGKVTANIFYGPVAFKVNSVVPNTAPSTGGETVYFIGEQFYQSSQIQCKFGTVISTGTYINSTCASCVVPPMLQSNSTTPSDYNVTIQLSEDGGSSFCLNTTFFIYTAASIPFVKPTSPNYQKIIYIVVGVGIAVLLIIAVGIYFIIRLRIKNKRLNGSKHALPIGINDDERSPLLKTDYKTLFEIKPIDISEIVVQNRIGRGSCAEVFTGTWRGIIVAIKKAKLLNEDDEDFLNELAQEATIMSQLRHPNICQFLGTCNNPPEILIVMEYMPLGSLYRILHDPSISLDWPRMKSMALDIAKGMNYLHCCDPIVIHRDLKSHNLLVDEHYRVKISDFGLSTRFKKHLDKKTAMTPVGTPCWTAPEVLRNDPYTEKADVFSFAIVLWEIVTREDPYQGMPTFQIVISVGQHKLRPIVPPQVSAPFTRLITECWSEDPQQRPSFQEIVKRLEAM.

The first 31 residues, 1–31 (MIIINKYIRMNKIAILFSFFILICCTGYSIS), serve as a signal peptide directing secretion. Over 32 to 423 (YKINGINENK…TSPNYQKIIY (392 aa)) the chain is Extracellular. The interval 124 to 153 (DRTDQVSTSSSSSSFSEENKKSSSDDSAPA) is disordered. A compositionally biased stretch (low complexity) spans 130-139 (STSSSSSSFS). Asparagine 157, asparagine 189, asparagine 283, asparagine 358, asparagine 373, asparagine 381, and asparagine 397 each carry an N-linked (GlcNAc...) asparagine glycan. The helical transmembrane segment at 424–444 (IVVGVGIAVLLIIAVGIYFII) threads the bilayer. Residues 445–749 (RLRIKNKRLN…QEIVKRLEAM (305 aa)) are Cytoplasmic-facing. In terms of domain architecture, Protein kinase spans 491–749 (IVVQNRIGRG…QEIVKRLEAM (259 aa)). ATP is bound by residues 497–505 (IGRGSCAEV) and lysine 518. Residue aspartate 615 is the Proton acceptor of the active site.

Belongs to the protein kinase superfamily. TKL Ser/Thr protein kinase family.

The protein localises to the membrane. The catalysed reaction is L-seryl-[protein] + ATP = O-phospho-L-seryl-[protein] + ADP + H(+). It carries out the reaction L-threonyl-[protein] + ATP = O-phospho-L-threonyl-[protein] + ADP + H(+). The sequence is that of Probable serine/threonine-protein kinase drkC (drkC) from Dictyostelium discoideum (Social amoeba).